Here is a 271-residue protein sequence, read N- to C-terminus: Putative phosphoenolpyruvate synthase regulatory protein (271 aa).

Position 152-159 (152-159 (GVSRSGKT)) interacts with ADP.

This sequence belongs to the pyruvate, phosphate/water dikinase regulatory protein family. PSRP subfamily.

It catalyses the reaction [pyruvate, water dikinase] + ADP = [pyruvate, water dikinase]-phosphate + AMP + H(+). The enzyme catalyses [pyruvate, water dikinase]-phosphate + phosphate + H(+) = [pyruvate, water dikinase] + diphosphate. Bifunctional serine/threonine kinase and phosphorylase involved in the regulation of the phosphoenolpyruvate synthase (PEPS) by catalyzing its phosphorylation/dephosphorylation. This Dichelobacter nodosus (strain VCS1703A) protein is Putative phosphoenolpyruvate synthase regulatory protein.